The primary structure comprises 97 residues: Large ribosomal subunit protein eL21 (97 aa).

The protein belongs to the eukaryotic ribosomal protein eL21 family.

The polypeptide is Large ribosomal subunit protein eL21 (Methanosarcina mazei (strain ATCC BAA-159 / DSM 3647 / Goe1 / Go1 / JCM 11833 / OCM 88) (Methanosarcina frisia)).